A 200-amino-acid chain; its full sequence is Chromophore lyase CpcT/CpeT 2 (200 aa).

This sequence belongs to the CpcT/CpeT biliprotein lyase family.

Functionally, covalently attaches a chromophore to Cys residue(s) of phycobiliproteins. This chain is Chromophore lyase CpcT/CpeT 2, found in Microcystis aeruginosa (strain NIES-843 / IAM M-2473).